Here is an 88-residue protein sequence, read N- to C-terminus: uncharacterized protein (88 aa).

A run of 2 helical transmembrane segments spans residues 13-33 and 62-82; these read FLAFLVSQLYFNFVELTGWGP and WFNIITVFLGVFTIIQIITGI.

The protein resides in the cell membrane. This is an uncharacterized protein from Bacillus subtilis (strain 168).